Consider the following 335-residue polypeptide: Syntaxin-18 (335 aa).

The Cytoplasmic portion of the chain corresponds to 1-309; it reads MAVDITLLFR…EDIREAIKNN (309 aa). Basic and acidic residues-rich tracts occupy residues 168–182 and 192–208; these read KLEP…ESTS and KDSE…EKIL. A disordered region spans residues 168 to 226; that stretch reads KLEPEPNTKTRESTSSEKVSQSPSKDSEENPATEERPEKILAETQPELGTWGDGKGEDE. Residues 243–305 form the t-SNARE coiled-coil homology domain; it reads IGEMNSLFDE…KEGNEDIREA (63 aa). The helical; Anchor for type IV membrane protein transmembrane segment at 310–330 threads the bilayer; that stretch reads AGFRVWILFFLVMCSFSLLFL. The Vesicular portion of the chain corresponds to 331–335; that stretch reads DWYDS.

This sequence belongs to the syntaxin family. As to quaternary structure, component of a SNARE complex consisting of STX18, USE1L, BNIP1/SEC20L, and SEC22B. RINT1/TIP20L and ZW10 are associated with the complex through interaction with BNIP1/SEC20L. Interacts directly with USE1L and BNIP1/SEC20L. Ubiquitous.

The protein localises to the endoplasmic reticulum membrane. Its subcellular location is the golgi apparatus membrane. In terms of biological role, syntaxin that may be involved in targeting and fusion of Golgi-derived retrograde transport vesicles with the ER. This is Syntaxin-18 (STX18) from Homo sapiens (Human).